A 269-amino-acid polypeptide reads, in one-letter code: 3'(2'),5'-bisphosphate nucleotidase CysQ (269 aa).

Mg(2+) is bound by residues glutamate 69, aspartate 89, leucine 91, aspartate 92, and aspartate 216. Glutamate 69 contacts substrate. Residues 91 to 94 (LDGT) and aspartate 216 each bind substrate.

Belongs to the inositol monophosphatase superfamily. CysQ family. Requires Mg(2+) as cofactor.

It is found in the cell inner membrane. It carries out the reaction adenosine 3',5'-bisphosphate + H2O = AMP + phosphate. In terms of biological role, converts adenosine-3',5'-bisphosphate (PAP) to AMP. The chain is 3'(2'),5'-bisphosphate nucleotidase CysQ from Aggregatibacter actinomycetemcomitans (Actinobacillus actinomycetemcomitans).